A 545-amino-acid chain; its full sequence is Lysine--tRNA ligase (545 aa).

The 'HIGH' region motif lies at 41-49 (PSGVPHLGH). The 'KMSKS' region signature appears at 306–310 (ALSSS).

It belongs to the class-I aminoacyl-tRNA synthetase family.

It localises to the cytoplasm. It catalyses the reaction tRNA(Lys) + L-lysine + ATP = L-lysyl-tRNA(Lys) + AMP + diphosphate. The sequence is that of Lysine--tRNA ligase from Natronomonas pharaonis (strain ATCC 35678 / DSM 2160 / CIP 103997 / JCM 8858 / NBRC 14720 / NCIMB 2260 / Gabara) (Halobacterium pharaonis).